A 297-amino-acid chain; its full sequence is Formiminotransferase cyclodeaminase-like protein (297 aa).

Residues 2 to 196 (LREMLGCCKV…GVVAVGACGW (195 aa)) form a formiminotransferase N-subdomain region. H89 functions as the For formimidoyltransferase activity in the catalytic mechanism. 178 to 187 (GPQEVSKAKG) is a binding site for folate.

The protein belongs to the formiminotransferase family. Expressed constitutively in roots, stems, leaves and flowers.

It is found in the golgi apparatus. The protein resides in the trans-Golgi network. It catalyses the reaction (6S)-5-formyl-5,6,7,8-tetrahydrofolate + L-glutamate = N-formyl-L-glutamate + (6S)-5,6,7,8-tetrahydrofolate + H(+). The enzyme catalyses 5-formimidoyltetrahydrofolate + L-glutamate = N-formimidoyl-L-glutamate + (6S)-5,6,7,8-tetrahydrofolate. It functions in the pathway one-carbon metabolism; tetrahydrofolate interconversion. Its function is as follows. Involved in the regulation of root growth. May regulate sorting and/or transportation of trans-Golgi network (TGN) vesicles in root cap peripheral cells, thus influencing the extracellular secretion of mucilage components in the root cap. This is Formiminotransferase cyclodeaminase-like protein from Arabidopsis thaliana (Mouse-ear cress).